The primary structure comprises 35 residues: MFGQYEVFVQLLLLALIVLAGPAVILLLYLRGADM.

The chain crosses the membrane as a helical span at residues 7-27 (VFVQLLLLALIVLAGPAVILL).

It belongs to the Psb30/Ycf12 family. In terms of assembly, PSII is composed of 1 copy each of membrane proteins PsbA, PsbB, PsbC, PsbD, PsbE, PsbF, PsbH, PsbI, PsbJ, PsbK, PsbL, PsbM, PsbT, PsbX, PsbY, PsbZ, Psb30/Ycf12, peripheral proteins PsbO, CyanoQ (PsbQ), PsbU, PsbV and a large number of cofactors. It forms dimeric complexes.

The protein resides in the cellular thylakoid membrane. In terms of biological role, a core subunit of photosystem II (PSII), probably helps stabilize the reaction center. This Synechococcus sp. (strain JA-3-3Ab) (Cyanobacteria bacterium Yellowstone A-Prime) protein is Photosystem II reaction center protein Psb30.